The sequence spans 211 residues: ATP phosphoribosyltransferase (211 aa).

It belongs to the ATP phosphoribosyltransferase family. Short subfamily. As to quaternary structure, heteromultimer composed of HisG and HisZ subunits.

The protein resides in the cytoplasm. The catalysed reaction is 1-(5-phospho-beta-D-ribosyl)-ATP + diphosphate = 5-phospho-alpha-D-ribose 1-diphosphate + ATP. It participates in amino-acid biosynthesis; L-histidine biosynthesis; L-histidine from 5-phospho-alpha-D-ribose 1-diphosphate: step 1/9. Functionally, catalyzes the condensation of ATP and 5-phosphoribose 1-diphosphate to form N'-(5'-phosphoribosyl)-ATP (PR-ATP). Has a crucial role in the pathway because the rate of histidine biosynthesis seems to be controlled primarily by regulation of HisG enzymatic activity. The sequence is that of ATP phosphoribosyltransferase from Bacillus mycoides (strain KBAB4) (Bacillus weihenstephanensis).